A 304-amino-acid chain; its full sequence is N-carbamoyl-D-amino acid hydrolase (304 aa).

One can recognise a CN hydrolase domain in the interval methionine 5 to leucine 276. Active-site residues include glutamate 47, lysine 127, and cysteine 172.

In terms of assembly, homotetramer.

It carries out the reaction an N-carbamoyl-D-amino acid + H2O + 2 H(+) = a D-alpha-amino acid + NH4(+) + CO2. With respect to regulation, the activity decreases with increasing concentration of H(2)O(2). Has 68% and 43% of activity remaining upon treatment with 0.1 and 0.2 mM H(2)O(2) for 30 minutes, respectively. Inhibited significantly by 2 mM Zn(2+), Cu(2+) and Ag(+), moderately by Co(2+), Mn(2+), Sn(2+) and Mg(2+), and only slightly by Ba(2+). Slightly activated by Fe(2+) and Ca(2+). No effect on activity by metal chelators EDTA and 8-hydroxyquinoline at 2 mM or by dithiothreitol, 2-mercaptoethanol or phenylmethanesulfonyl fluoride. Its function is as follows. Catalyzes the hydrolysis of N-carbamoyl-D-amino acids to the corresponding D-amino acids. Hydrolyzes aromatic and aliphatic N-carbamoyl-D-amino acids in vitro. Effectively hydrolyzes N-carbamoyl-D-p-hydroxyphenylglycine and N-carbamoyl-DL-p-hydroxyphenylglycine, and to a lesser extent N-carbamoyl-D-methionine. No activity for N-carbamoyl-L-amino acids, N-carbamoyl-beta-alanine or (RS)-alpha-ethyl-N-carbamoylphenylglycine in vitro. This is N-carbamoyl-D-amino acid hydrolase from Ensifer adhaerens (Sinorhizobium morelense).